A 376-amino-acid chain; its full sequence is Pulmonary surfactant-associated protein B (376 aa).

An N-terminal signal peptide occupies residues 1 to 24; sequence MAKLHLQWLLLLPTLCSLGAATES. In terms of domain architecture, Saposin A-type spans 25-63; that stretch reads ASSPDCAQGPKFWCQSLEQAIQCRALGHCLQEVWGHAGA. Residues 25-190 constitute a propeptide that is removed on maturation; that stretch reads ASSPDCAQGP…PHTQDLSEQQ (166 aa). Saposin B-type domains are found at residues 63 to 145, 194 to 271, and 290 to 365; these read ANDL…PLGQ, PLPF…STAD, and QDTE…EAPA. 9 disulfide bridges follow: cysteine 67–cysteine 141, cysteine 70–cysteine 135, cysteine 98–cysteine 110, cysteine 198–cysteine 267, cysteine 201–cysteine 261, cysteine 225–cysteine 236, cysteine 294–cysteine 361, cysteine 297–cysteine 355, and cysteine 320–cysteine 330. A propeptide spanning residues 270–376 is cleaved from the precursor; sequence ADAIGPALPA…PLQCFQTPHL (107 aa). The N-linked (GlcNAc...) asparagine glycan is linked to asparagine 306.

Homodimer; disulfide-linked.

The protein resides in the secreted. Its subcellular location is the extracellular space. The protein localises to the surface film. In terms of biological role, pulmonary surfactant-associated proteins promote alveolar stability by lowering the surface tension at the air-liquid interface in the peripheral air spaces. SP-B increases the collapse pressure of palmitic acid to nearly 70 millinewtons per meter. The polypeptide is Pulmonary surfactant-associated protein B (Sftpb) (Rattus norvegicus (Rat)).